Consider the following 256-residue polypeptide: Ubiquinone/menaquinone biosynthesis C-methyltransferase UbiE (256 aa).

Residues threonine 79, aspartate 100, and 128-129 (DA) each bind S-adenosyl-L-methionine.

The protein belongs to the class I-like SAM-binding methyltransferase superfamily. MenG/UbiE family.

It catalyses the reaction a 2-demethylmenaquinol + S-adenosyl-L-methionine = a menaquinol + S-adenosyl-L-homocysteine + H(+). It carries out the reaction a 2-methoxy-6-(all-trans-polyprenyl)benzene-1,4-diol + S-adenosyl-L-methionine = a 5-methoxy-2-methyl-3-(all-trans-polyprenyl)benzene-1,4-diol + S-adenosyl-L-homocysteine + H(+). Its pathway is quinol/quinone metabolism; menaquinone biosynthesis; menaquinol from 1,4-dihydroxy-2-naphthoate: step 2/2. It participates in cofactor biosynthesis; ubiquinone biosynthesis. Functionally, methyltransferase required for the conversion of demethylmenaquinol (DMKH2) to menaquinol (MKH2) and the conversion of 2-polyprenyl-6-methoxy-1,4-benzoquinol (DDMQH2) to 2-polyprenyl-3-methyl-6-methoxy-1,4-benzoquinol (DMQH2). In Ectopseudomonas mendocina (strain ymp) (Pseudomonas mendocina), this protein is Ubiquinone/menaquinone biosynthesis C-methyltransferase UbiE.